A 129-amino-acid chain; its full sequence is Small ribosomal subunit protein uS11 (129 aa).

This sequence belongs to the universal ribosomal protein uS11 family. In terms of assembly, part of the 30S ribosomal subunit. Interacts with proteins S7 and S18. Binds to IF-3.

In terms of biological role, located on the platform of the 30S subunit, it bridges several disparate RNA helices of the 16S rRNA. Forms part of the Shine-Dalgarno cleft in the 70S ribosome. This Methylobacterium nodulans (strain LMG 21967 / CNCM I-2342 / ORS 2060) protein is Small ribosomal subunit protein uS11.